The sequence spans 89 residues: Small ribosomal subunit protein uS15 (89 aa).

The protein belongs to the universal ribosomal protein uS15 family. As to quaternary structure, part of the 30S ribosomal subunit. Forms a bridge to the 50S subunit in the 70S ribosome, contacting the 23S rRNA.

In terms of biological role, one of the primary rRNA binding proteins, it binds directly to 16S rRNA where it helps nucleate assembly of the platform of the 30S subunit by binding and bridging several RNA helices of the 16S rRNA. Forms an intersubunit bridge (bridge B4) with the 23S rRNA of the 50S subunit in the ribosome. The chain is Small ribosomal subunit protein uS15 from Orientia tsutsugamushi (strain Ikeda) (Rickettsia tsutsugamushi).